The primary structure comprises 1141 residues: DNA polymerase II large subunit (1141 aa).

The interval 567–587 is disordered; sequence AGTRVGGRMGRPGKSAPRKMK.

This sequence belongs to the archaeal DNA polymerase II family. As to quaternary structure, heterodimer of a large subunit and a small subunit.

It catalyses the reaction DNA(n) + a 2'-deoxyribonucleoside 5'-triphosphate = DNA(n+1) + diphosphate. The enzyme catalyses Exonucleolytic cleavage in the 3'- to 5'-direction to yield nucleoside 5'-phosphates.. In terms of biological role, possesses two activities: a DNA synthesis (polymerase) and an exonucleolytic activity that degrades single-stranded DNA in the 3'- to 5'-direction. Has a template-primer preference which is characteristic of a replicative DNA polymerase. The sequence is that of DNA polymerase II large subunit from Methanocorpusculum labreanum (strain ATCC 43576 / DSM 4855 / Z).